The following is a 196-amino-acid chain: Nodulation protein A (196 aa).

This sequence belongs to the NodA family.

It is found in the cytoplasm. N-acyltransferase required for nodulation. Acts in the production of a small, heat-stable compound (Nod) that stimulates mitosis in various plant protoplasts. This Mesorhizobium sp. (strain 7653R) protein is Nodulation protein A.